We begin with the raw amino-acid sequence, 130 residues long: Small ribosomal subunit protein uS9 (130 aa).

It belongs to the universal ribosomal protein uS9 family.

This chain is Small ribosomal subunit protein uS9, found in Xylella fastidiosa (strain 9a5c).